Reading from the N-terminus, the 298-residue chain is Probable GTP 3',8-cyclase (298 aa).

Residues Lys4–Glu230 enclose the Radical SAM core domain. Residue Arg13 coordinates GTP. [4Fe-4S] cluster contacts are provided by Cys20 and Cys24. An S-adenosyl-L-methionine-binding site is contributed by Tyr26. Cys27 serves as a coordination point for [4Fe-4S] cluster. Lys61 contacts GTP. An S-adenosyl-L-methionine-binding site is contributed by Gly65. Thr91 lines the GTP pocket. Ser115 lines the S-adenosyl-L-methionine pocket. Residue Lys152 participates in GTP binding. [4Fe-4S] cluster-binding residues include Cys243 and Cys246. Arg248 to Arg250 is a binding site for GTP. Residue Cys260 coordinates [4Fe-4S] cluster.

This sequence belongs to the radical SAM superfamily. MoaA family. [4Fe-4S] cluster serves as cofactor.

The enzyme catalyses GTP + AH2 + S-adenosyl-L-methionine = (8S)-3',8-cyclo-7,8-dihydroguanosine 5'-triphosphate + 5'-deoxyadenosine + L-methionine + A + H(+). Its pathway is cofactor biosynthesis; molybdopterin biosynthesis. Catalyzes the cyclization of GTP to (8S)-3',8-cyclo-7,8-dihydroguanosine 5'-triphosphate. In Methanocaldococcus jannaschii (strain ATCC 43067 / DSM 2661 / JAL-1 / JCM 10045 / NBRC 100440) (Methanococcus jannaschii), this protein is Probable GTP 3',8-cyclase.